The chain runs to 318 residues: MPSITVRRLYQENQQKLNLTWVAGTGGSDNVIGNDDQRPTLALVGHLNFIHPNRVQVLGLAEVDYLNKLEQSAAKTALDQLFHKSMSVVMVANGQPVPRLLRDYCHSHNVPLMCSTLESPYLMDVLRIYLARALAVSTVLHGVFLDVFEIGVLIMGDSAMGKSELALELISRGHGMVADDAVELYRIGPDTLEGRCPPLLRDFLEVRGLGILNIRTIFGETAVRPKKVLKLIIHLVKANDQAMQALDRLNIQSETQDIIGVTVRKVVLPVAAGRNLAVLVEAAVRNYILQLRGIDSTREFIERHTNFLRDQENAPDID.

Residues His141 and Lys162 contribute to the active site. An ATP-binding site is contributed by 156–163; that stretch reads GDSAMGKS. Ser163 provides a ligand contact to Mg(2+). The active-site Proton acceptor; for phosphorylation activity. Proton donor; for dephosphorylation activity is Asp180. An important for the catalytic mechanism of both phosphorylation and dephosphorylation region spans residues 204 to 213; that stretch reads LEVRGLGILN. Glu205 contacts Mg(2+). Arg248 is an active-site residue. Residues 269 to 274 are important for the catalytic mechanism of dephosphorylation; sequence PVAAGR.

It belongs to the HPrK/P family. As to quaternary structure, homohexamer. It depends on Mg(2+) as a cofactor.

It catalyses the reaction [HPr protein]-L-serine + ATP = [HPr protein]-O-phospho-L-serine + ADP + H(+). The enzyme catalyses [HPr protein]-O-phospho-L-serine + phosphate + H(+) = [HPr protein]-L-serine + diphosphate. In terms of biological role, catalyzes the ATP- as well as the pyrophosphate-dependent phosphorylation of a specific serine residue in HPr, a phosphocarrier protein of the phosphoenolpyruvate-dependent sugar phosphotransferase system (PTS). HprK/P also catalyzes the pyrophosphate-producing, inorganic phosphate-dependent dephosphorylation (phosphorolysis) of seryl-phosphorylated HPr (P-Ser-HPr). This Chromobacterium violaceum (strain ATCC 12472 / DSM 30191 / JCM 1249 / CCUG 213 / NBRC 12614 / NCIMB 9131 / NCTC 9757 / MK) protein is HPr kinase/phosphorylase.